The primary structure comprises 369 residues: Serpentine receptor class epsilon-2 (369 aa).

The Extracellular portion of the chain corresponds to 1–20; it reads MLIQYHKISNNDPNRIQLLS. The helical transmembrane segment at 21-41 threads the bilayer; it reads MIFCEIILLIFELFEFAAIIF. Topologically, residues 42-55 are cytoplasmic; that stretch reads NMSRYQFHFNLKVV. Residues 56 to 76 form a helical membrane-spanning segment; the sequence is VGYAIFAYWFDIIARITIAFF. Topologically, residues 77–118 are extracellular; sequence EIGLFNLDDQTIAVETEKLPWNYKNMFFMLLFCCSTYRVYFM. The chain crosses the membrane as a helical span at residues 119–139; it reads FLICSVTLLLAVERFLATIWV. Over 140 to 148 the chain is Cytoplasmic; sequence STYESVQHK. The chain crosses the membrane as a helical span at residues 149 to 169; that stretch reads WVSIVLTSTNSIAGIFGSLLF. Topologically, residues 170–178 are extracellular; it reads HYELIFDTA. Residues 179 to 199 traverse the membrane as a helical segment; that stretch reads VWCSLGLCFNFVSIFLYVILF. Topologically, residues 200–234 are cytoplasmic; the sequence is NSNKSKIELCQTREITQSYTLSLRFQLNENLKIMN. The helical transmembrane segment at 235–255 threads the bilayer; that stretch reads WIKNSILVVTCFNTLLAGFLI. The Extracellular segment spans residues 256-274; sequence ASNNEYLKNDYPVLVKCCH. A helical membrane pass occupies residues 275–295; that stretch reads TFLNLGIAIYAQVVFFVAILA. Residues 296–369 are Cytoplasmic-facing; the sequence is DRHFRTYFLR…VAKKKRFWRV (74 aa).

It belongs to the nematode receptor-like protein sre family.

Its subcellular location is the cell membrane. In Caenorhabditis elegans, this protein is Serpentine receptor class epsilon-2 (sre-2).